The primary structure comprises 563 residues: Proton channel OTOP2 (563 aa).

Residues 1 to 20 are disordered; that stretch reads MSEELVPHPNESLPGPRASP. The next 12 membrane-spanning stretches (helical) occupy residues 30-50, 62-82, 100-120, 137-157, 173-193, 242-262, 290-310, 325-345, 373-393, 403-423, 496-516, and 528-548; these read LLSV…ISGG, VFAL…FYLL, PIWL…MDVF, ILHP…LWIS, LMFT…DESV, FYLY…LYVM, FFAG…VFIL, ALVI…LVSL, LMGA…AVVV, LNLS…VFII, DISL…AFGA, and FYGY…GIFY.

The protein belongs to the otopetrin family. As to expression, expressed at higher level in stomach, testis and olfactory bulb.

It localises to the cell membrane. The catalysed reaction is H(+)(in) = H(+)(out). Actives at neutral and alkaline extracellular pH, acid extracellular pH appears to inhibit the channel. Insensitive to activation by Zn(2+). Its function is as follows. Proton-selective ion channel open at neutral pH. Actives at neutral and alkaline extracellular pH, likely participates in some alkali-related physiological activities. This is Proton channel OTOP2 from Mus musculus (Mouse).